Here is a 109-residue protein sequence, read N- to C-terminus: uncharacterized protein (109 aa).

This is an uncharacterized protein from Autographa californica nuclear polyhedrosis virus (AcMNPV).